Consider the following 844-residue polypeptide: MPYDPAISEPRWQEAWEQADTFRAVRDERPKYYVLEMFPYPSGRIHMGHVRNYTMGDVVARFKRAQGFSVLHPMGWDAFGMPAENAAMEQGGHPRDWTYGNIATMRGQLKPLGLSIDWSREFATCDDAYVAQQQALFLDMLEAGLITRKSAQVNWDPVDMTVLANEQVIDGKGWRSGATVERKELTQWFFKISDYSDELLSALDGLEGWPEKVRLMQANWIGKSRGLQFRFHTVDLPDFPTIEVYTTRPDTLMGASFVALSPDHPLVKALAASDPKVAAFVEECRRIGTTEEAIETAPKMGFDTGLTVRHPLDADWRLPIWIANFVLMDYGTGAIFGSPAHDERDHEFATKYGLPIRATFGERGMDLEQADALVAKAPFVPLKSETVTYVRGFAGAADQTGEAAVDAAIRHAEVAGYGEGVTKFRLRDWGISRQRYWGCPIPVVHCDACGTVPEAKANLPVLLPQDVSFEVPGNPLNRHPTWAATTCPKCGGPARRETDTMDTFVDSSWYYARFTSPHAATPTDRPETDYWMNVDQYIGGIEHAILHLLYSRFFARAMVKTGHLPESAKEPFDALFTQGMVTHEIYMTRDERGRPVYHLPEDVVDGKLADGTPVEVIPSAKMSKSKKNVVDPVNIVEGFGADTARWFMLSDSPPERDVEWTAAGAEAANRFLARVWRLADEIPEDGADPDLTRAAHRAIDEVTRAIEGFAFNKAVAKIYELANAIAKSGAGGESRREALRIMAQLMAPMVPHLAEEIWMKAGGQGMVVDATWPKADPALLVSDSVVLPIQINGKRRAEIEVPKDMPKDQIEAIVLADETVRRFMEGQAPKKLIVVPGRIVNVVV.

A 'HIGH' region motif is present at residues 39–49 (PYPSGRIHMGH). The short motif at 621 to 625 (KMSKS) is the 'KMSKS' region element. K624 contributes to the ATP binding site.

This sequence belongs to the class-I aminoacyl-tRNA synthetase family.

It localises to the cytoplasm. It carries out the reaction tRNA(Leu) + L-leucine + ATP = L-leucyl-tRNA(Leu) + AMP + diphosphate. In Paracoccus denitrificans (strain Pd 1222), this protein is Leucine--tRNA ligase.